The following is a 185-amino-acid chain: Peptide deformylase 2 (185 aa).

Cys108 and His150 together coordinate Fe cation. The active site involves Glu151. His154 contributes to the Fe cation binding site.

This sequence belongs to the polypeptide deformylase family. It depends on Fe(2+) as a cofactor.

The enzyme catalyses N-terminal N-formyl-L-methionyl-[peptide] + H2O = N-terminal L-methionyl-[peptide] + formate. Its function is as follows. Removes the formyl group from the N-terminal Met of newly synthesized proteins. Requires at least a dipeptide for an efficient rate of reaction. N-terminal L-methionine is a prerequisite for activity but the enzyme has broad specificity at other positions. In Nitrosomonas europaea (strain ATCC 19718 / CIP 103999 / KCTC 2705 / NBRC 14298), this protein is Peptide deformylase 2.